Here is a 513-residue protein sequence, read N- to C-terminus: GMP synthase [glutamine-hydrolyzing] (513 aa).

Residues 3-200 enclose the Glutamine amidotransferase type-1 domain; the sequence is SVLVLDFGSQ…LIDIAGITPD (198 aa). Catalysis depends on Cys80, which acts as the Nucleophile. Active-site residues include His174 and Glu176. Residues 201–388 form the GMPS ATP-PPase domain; that stretch reads WSPKHFIDHQ…LGIAEDILMR (188 aa). Residue 228–234 participates in ATP binding; that stretch reads SGGVDSS.

Homodimer.

It catalyses the reaction XMP + L-glutamine + ATP + H2O = GMP + L-glutamate + AMP + diphosphate + 2 H(+). It participates in purine metabolism; GMP biosynthesis; GMP from XMP (L-Gln route): step 1/1. Functionally, catalyzes the synthesis of GMP from XMP. This Chlorobium limicola (strain DSM 245 / NBRC 103803 / 6330) protein is GMP synthase [glutamine-hydrolyzing].